The sequence spans 465 residues: Trigger factor (465 aa).

The PPIase FKBP-type domain maps to 164–245; sequence GDFVSIDLSA…VQSVKERELP (82 aa). The segment at 430–465 is disordered; sequence GNTVDTAEMFGEPAAEPEQADAAQAGDAEKAAADSE. Low complexity predominate over residues 440–455; sequence GEPAAEPEQADAAQAG. Residues 456–465 show a composition bias toward basic and acidic residues; sequence DAEKAAADSE.

It belongs to the FKBP-type PPIase family. Tig subfamily.

Its subcellular location is the cytoplasm. The catalysed reaction is [protein]-peptidylproline (omega=180) = [protein]-peptidylproline (omega=0). In terms of biological role, involved in protein export. Acts as a chaperone by maintaining the newly synthesized protein in an open conformation. Functions as a peptidyl-prolyl cis-trans isomerase. This chain is Trigger factor, found in Nocardia farcinica (strain IFM 10152).